The primary structure comprises 390 residues: 8-demethyl-8-(2-methoxy-alpha-L-rhamnosyl)-tetracenomycin-C 3'-O-methyltransferase (390 aa).

S-adenosyl-L-methionine contacts are provided by residues 202–208 (ELGIGGY), Ser-217, Asp-234, 252–253 (SQ), and Asp-275. Position 275 (Asp-275) interacts with Mg(2+). His-278 (proton acceptor) is an active-site residue. Positions 303 and 304 each coordinate Mg(2+).

This sequence belongs to the methyltransferase OleY/MycE family. It depends on Mg(2+) as a cofactor.

It catalyses the reaction 8-demethyl-8-(2-O-methyl-alpha-L-rhamnosyl)-tetracenomycin C + S-adenosyl-L-methionine = 8-demethyl-8-(2,3-di-O-methyl-alpha-L-rhamnosyl)-tetracenomycin C + S-adenosyl-L-homocysteine + H(+). It functions in the pathway antibiotic biosynthesis. Its function is as follows. O-methyltransferase involved in the biosynthesis of the permethylated L-rhamnose moiety of elloramycin, an antitumor polyketide. Mediates the methylation of the hydroxy groups at the 3'-position after the sugar moiety has been attached to the aglycon. This is 8-demethyl-8-(2-methoxy-alpha-L-rhamnosyl)-tetracenomycin-C 3'-O-methyltransferase from Streptomyces olivaceus.